A 213-amino-acid chain; its full sequence is Adenylate kinase (213 aa).

Position 10–15 (Gly-10–Thr-15) interacts with ATP. Residues Ser-30 to Val-59 are NMP. AMP contacts are provided by residues Thr-31, Arg-36, Ala-57 to Val-59, Gly-85 to Arg-88, and Gln-92. Residues Gly-126–Asp-163 are LID. Arg-127 is an ATP binding site. Positions 130 and 133 each coordinate Zn(2+). Ser-136–Tyr-137 contacts ATP. Cys-150 and Cys-153 together coordinate Zn(2+). Arg-160 and Arg-171 together coordinate AMP. Gln-199 contributes to the ATP binding site.

This sequence belongs to the adenylate kinase family. As to quaternary structure, monomer.

The protein resides in the cytoplasm. It carries out the reaction AMP + ATP = 2 ADP. It functions in the pathway purine metabolism; AMP biosynthesis via salvage pathway; AMP from ADP: step 1/1. Catalyzes the reversible transfer of the terminal phosphate group between ATP and AMP. Plays an important role in cellular energy homeostasis and in adenine nucleotide metabolism. The sequence is that of Adenylate kinase from Desulforamulus reducens (strain ATCC BAA-1160 / DSM 100696 / MI-1) (Desulfotomaculum reducens).